The primary structure comprises 305 residues: MAKKGVNKQARTNSKLDQLVTSLERLTVGSMQRKSNRQRPKSRKTSGRVVTAPVSSAALIRYKAPSLNGNSMDSVRLASKSLVIEAVKVGIEYQVSVVPLVPCIQHTWLSGVACYWSKYRWRSCRLVYIPYCSSSFTGYVSMGLSYDYADAIPSDETEMSALKGYTTTSAWAGSEGIKMLSYPTGAVPSGAVVLSLDCASMSKPWYPYISAVAATNLGEKQPELLNQYTPARAFIGTGGGMQGVNGLTAGRVFMVYDIELIEPVSPAMQENLSSTGRSKIDQSISPLTGADFEIVRKVSAISQIQ.

A disordered region spans residues 30-49 (SMQRKSNRQRPKSRKTSGRV). The segment covering 34–46 (KSNRQRPKSRKTS) has biased composition (basic residues).

It belongs to the icosahedral plant coat protein family.

It is found in the virion. In terms of biological role, capsid protein self-assembles to form an icosahedral capsid about 34 nm in diameter. The capsid encapsulates the genomic RNA (Potential). In Poinsettia latent virus (isolate Euphorbia pulcherrima/Germany/Siepen/2005) (PnLV), this protein is Capsid protein.